We begin with the raw amino-acid sequence, 129 residues long: MLLKVRRASLKPPATPHQGAFRAGNVIGQLIYLLTWSLFTAWLRPPTLLQGPRTSPQGSPPRSPWGDCAEPSCLCEMKIRRRRHEGPAWGQSGFLAGGLHLVPSSLSLAACGVVRMKGLWGRGAGIRGR.

2 helical membrane passes run 23–43 (AGNV…TAWL) and 94–114 (FLAG…CGVV).

The protein localises to the membrane. The chain is Transmembrane protein 105 (TMEM105) from Homo sapiens (Human).